Here is a 189-residue protein sequence, read N- to C-terminus: Peptidyl-tRNA hydrolase (189 aa).

Tyr-16 contributes to the tRNA binding site. The active-site Proton acceptor is His-21. Residues Phe-67, Asn-69, and Asn-115 each contribute to the tRNA site.

Belongs to the PTH family. As to quaternary structure, monomer.

It localises to the cytoplasm. The catalysed reaction is an N-acyl-L-alpha-aminoacyl-tRNA + H2O = an N-acyl-L-amino acid + a tRNA + H(+). Hydrolyzes ribosome-free peptidyl-tRNAs (with 1 or more amino acids incorporated), which drop off the ribosome during protein synthesis, or as a result of ribosome stalling. Functionally, catalyzes the release of premature peptidyl moieties from peptidyl-tRNA molecules trapped in stalled 50S ribosomal subunits, and thus maintains levels of free tRNAs and 50S ribosomes. The polypeptide is Peptidyl-tRNA hydrolase (Legionella pneumophila (strain Paris)).